Consider the following 251-residue polypeptide: uncharacterized protein (251 aa).

10–34 (ITGAGSGIGKKAAVMFAERGAKVAI) is a binding site for NADP(+). Substrate is bound at residue Ser139. Tyr152 functions as the Proton acceptor in the catalytic mechanism.

This sequence belongs to the short-chain dehydrogenases/reductases (SDR) family.

This is an uncharacterized protein from Thermotoga maritima (strain ATCC 43589 / DSM 3109 / JCM 10099 / NBRC 100826 / MSB8).